Reading from the N-terminus, the 246-residue chain is ATP synthase subunit a (246 aa).

Positions 1–3 are cleaved as a propeptide — removed in mature form; that stretch reads MFY. 7 helical membrane passes run 21–41, 56–76, 82–102, 113–133, 138–158, 184–204, and 206–226; these read LTFSITNYTLYLIIVSLIIIF, WGVSVIAIYDTILNLVNGQIG, YFPLIFTIFNFILIANLISMI, VAVVSFSLTLWIGNVVLGLYL, FFALFVPSGTPLALVPVLVLI, LMLILGSLIISLMSSSFLGFV, and GIIPILAVVAITILEFGIAII.

Belongs to the ATPase A chain family. As to quaternary structure, F-type ATPases have 2 components, CF(1) - the catalytic core - and CF(0) - the membrane proton channel. CF(1) has five subunits: alpha(3), beta(3), gamma(1), delta(1), epsilon(1). CF(0) has three main subunits: a, b and c.

The protein localises to the mitochondrion inner membrane. Its function is as follows. Mitochondrial membrane ATP synthase (F(1)F(0) ATP synthase or Complex V) produces ATP from ADP in the presence of a proton gradient across the membrane which is generated by electron transport complexes of the respiratory chain. F-type ATPases consist of two structural domains, F(1) - containing the extramembraneous catalytic core and F(0) - containing the membrane proton channel, linked together by a central stalk and a peripheral stalk. During catalysis, ATP synthesis in the catalytic domain of F(1) is coupled via a rotary mechanism of the central stalk subunits to proton translocation. Key component of the proton channel; it may play a direct role in the translocation of protons across the membrane. This chain is ATP synthase subunit a (ATP6), found in Candida parapsilosis (Yeast).